Here is a 98-residue protein sequence, read N- to C-terminus: uncharacterized protein (98 aa).

Residues Ser77 to His98 are disordered.

The protein to M.tuberculosis Rv1991c and Rv3269.

This is an uncharacterized protein from Mycobacterium bovis (strain ATCC BAA-935 / AF2122/97).